The sequence spans 276 residues: Urease accessory protein UreD (276 aa).

The protein belongs to the UreD family. UreD, UreF and UreG form a complex that acts as a GTP-hydrolysis-dependent molecular chaperone, activating the urease apoprotein by helping to assemble the nickel containing metallocenter of UreC. The UreE protein probably delivers the nickel.

The protein localises to the cytoplasm. Functionally, required for maturation of urease via the functional incorporation of the urease nickel metallocenter. In Bradyrhizobium diazoefficiens (strain JCM 10833 / BCRC 13528 / IAM 13628 / NBRC 14792 / USDA 110), this protein is Urease accessory protein UreD.